The sequence spans 309 residues: Protein FdhE homolog (309 aa).

It belongs to the FdhE family.

The protein localises to the cytoplasm. Its function is as follows. Necessary for formate dehydrogenase activity. The protein is Protein FdhE homolog of Cronobacter sakazakii (strain ATCC BAA-894) (Enterobacter sakazakii).